Reading from the N-terminus, the 501-residue chain is UDP-N-acetylmuramate--L-alanine ligase (501 aa).

An ATP-binding site is contributed by 130–136; the sequence is GTHGKTS.

The protein belongs to the MurCDEF family.

The protein resides in the cytoplasm. The catalysed reaction is UDP-N-acetyl-alpha-D-muramate + L-alanine + ATP = UDP-N-acetyl-alpha-D-muramoyl-L-alanine + ADP + phosphate + H(+). Its pathway is cell wall biogenesis; peptidoglycan biosynthesis. Functionally, cell wall formation. This chain is UDP-N-acetylmuramate--L-alanine ligase, found in Nocardia farcinica (strain IFM 10152).